The following is a 276-amino-acid chain: Small ribosomal subunit protein uS2 (276 aa).

It belongs to the universal ribosomal protein uS2 family.

This chain is Small ribosomal subunit protein uS2, found in Chlamydia abortus (strain DSM 27085 / S26/3) (Chlamydophila abortus).